The primary structure comprises 1328 residues: Retrovirus-related Pol polyprotein from transposon TNT 1-94 (1328 aa).

The interval 189–265 (PENQGQALIT…SGQKNDDNTA (77 aa)) is disordered. Over residues 217 to 229 (ARGKSKNRSKSRV) the composition is skewed to basic residues. Residues 230–247 (RNCYNCNQPGHFKRDCPN) form a CCHC-type zinc finger. Residues 241 to 253 (FKRDCPNPRKGKG) are compositionally biased toward basic and acidic residues. Catalysis depends on aspartate 297, which acts as the For protease activity. An Integrase catalytic domain is found at 473–642 (SSERKLNILD…IPERVWTNKE (170 aa)). Residues 729 to 742 (TIPSTSNNPTSAES) are compositionally biased toward polar residues. The interval 729-800 (TIPSTSNNPT…RVESRRYPST (72 aa)) is disordered. A compositionally biased stretch (basic and acidic residues) spans 770-798 (EVEHPTQGEEQHQPLRRSERPRVESRRYP).

It carries out the reaction DNA(n) + a 2'-deoxyribonucleoside 5'-triphosphate = DNA(n+1) + diphosphate. The chain is Retrovirus-related Pol polyprotein from transposon TNT 1-94 from Nicotiana tabacum (Common tobacco).